The chain runs to 355 residues: MVCCFGKKDERTKTIEKELHKERKIMRRQINLLLLGSGESGKSTFVKQMHIIHGAGEFTADEVRAYRQQIYQNAISAMRVLLDARNKLGIAWEDPKRQVEVEKVMRFTVGDLLKGIDFTTFVEVAPIISDFWNDAAIRKTYEQRNLFQISDSCQYFFEHIPRIAMPDFYPTNRDILFCRKATRGISEHIFEINKIPFRFIDVGGQRSQRQKWFQCFTDITSILFMVASNEYDQVILEDRRTNRVVESRSVFETIVNNRSFSNVSIILFMNKNDLLQEKVPKSDIRQYFTDFTGDHTLVRDVQFFLVDKFEASRRDRARPFFYHFTTAVDTENIRRVFRDVRESILEQNLKTLMMQ.

One can recognise a G-alpha domain in the interval 28-355 (RQINLLLLGS…EQNLKTLMMQ (328 aa)). The tract at residues 31-44 (NLLLLGSGESGKST) is G1 motif. GTP is bound by residues 36 to 43 (GSGESGKS), 176 to 182 (LFCRKAT), 201 to 205 (DVGGQ), 270 to 273 (NKND), and A327. S43 and T182 together coordinate Mg(2+). A G2 motif region spans residues 174 to 182 (DILFCRKAT). The tract at residues 197–206 (FRFIDVGGQR) is G3 motif. The segment at 266-273 (ILFMNKND) is G4 motif. Positions 325-330 (TTAVDT) are G5 motif.

The protein belongs to the G-alpha family. G proteins are composed of 3 units; alpha, beta and gamma. The alpha chain contains the guanine nucleotide binding site.

Functionally, guanine nucleotide-binding proteins (G proteins) are involved as modulators or transducers in various transmembrane signaling systems. May play a role in resistance to fungal infection in the epidermis by regulating the up-regulation of several antimicrobial peptides of the NLP and CNC families. Upstream of plc-3, egl-8, tpa-1 and the p38-like pathway, required for the expression of antimicrobial peptide nlp-29 in the epidermis in response to fungal infection or physical injury. In Caenorhabditis briggsae, this protein is Guanine nucleotide-binding protein alpha-12 subunit (gpa-12).